The chain runs to 287 residues: ATP synthase gamma chain (287 aa).

Belongs to the ATPase gamma chain family. As to quaternary structure, F-type ATPases have 2 components, CF(1) - the catalytic core - and CF(0) - the membrane proton channel. CF(1) has five subunits: alpha(3), beta(3), gamma(1), delta(1), epsilon(1). CF(0) has three main subunits: a, b and c.

It localises to the cell inner membrane. Its function is as follows. Produces ATP from ADP in the presence of a proton gradient across the membrane. The gamma chain is believed to be important in regulating ATPase activity and the flow of protons through the CF(0) complex. The chain is ATP synthase gamma chain from Geobacter sp. (strain M21).